The following is a 158-amino-acid chain: Protein shisa-like-2B (158 aa).

The helical transmembrane segment at 65–85 (IGALVGLGIAALVLLAFVISV) threads the bilayer.

Belongs to the shisa family.

Its subcellular location is the membrane. This is Protein shisa-like-2B (Shisal2b) from Mus musculus (Mouse).